The following is a 246-amino-acid chain: Ribonuclease PH (246 aa).

Phosphate-binding positions include Arg-91 and 129–131; that span reads GTR.

The protein belongs to the RNase PH family. Homohexameric ring arranged as a trimer of dimers.

It catalyses the reaction tRNA(n+1) + phosphate = tRNA(n) + a ribonucleoside 5'-diphosphate. Phosphorolytic 3'-5' exoribonuclease that plays an important role in tRNA 3'-end maturation. Removes nucleotide residues following the 3'-CCA terminus of tRNAs; can also add nucleotides to the ends of RNA molecules by using nucleoside diphosphates as substrates, but this may not be physiologically important. Probably plays a role in initiation of 16S rRNA degradation (leading to ribosome degradation) during starvation. The protein is Ribonuclease PH of Paraburkholderia phytofirmans (strain DSM 17436 / LMG 22146 / PsJN) (Burkholderia phytofirmans).